Here is a 238-residue protein sequence, read N- to C-terminus: 3-deoxy-manno-octulosonate cytidylyltransferase (238 aa).

Belongs to the KdsB family.

It is found in the cytoplasm. It carries out the reaction 3-deoxy-alpha-D-manno-oct-2-ulosonate + CTP = CMP-3-deoxy-beta-D-manno-octulosonate + diphosphate. Its pathway is nucleotide-sugar biosynthesis; CMP-3-deoxy-D-manno-octulosonate biosynthesis; CMP-3-deoxy-D-manno-octulosonate from 3-deoxy-D-manno-octulosonate and CTP: step 1/1. It functions in the pathway bacterial outer membrane biogenesis; lipopolysaccharide biosynthesis. In terms of biological role, activates KDO (a required 8-carbon sugar) for incorporation into bacterial lipopolysaccharide in Gram-negative bacteria. The chain is 3-deoxy-manno-octulosonate cytidylyltransferase from Nitratiruptor sp. (strain SB155-2).